Here is a 369-residue protein sequence, read N- to C-terminus: 3-dehydroquinate synthase (369 aa).

Residues 72–77 (SGEKEK), 130–131 (TT), Lys-142, and Lys-151 each bind NAD(+). Zn(2+)-binding residues include Glu-184, His-247, and His-264.

This sequence belongs to the sugar phosphate cyclases superfamily. Dehydroquinate synthase family. Co(2+) is required as a cofactor. The cofactor is Zn(2+). It depends on NAD(+) as a cofactor.

It localises to the cytoplasm. It catalyses the reaction 7-phospho-2-dehydro-3-deoxy-D-arabino-heptonate = 3-dehydroquinate + phosphate. The protein operates within metabolic intermediate biosynthesis; chorismate biosynthesis; chorismate from D-erythrose 4-phosphate and phosphoenolpyruvate: step 2/7. Its function is as follows. Catalyzes the conversion of 3-deoxy-D-arabino-heptulosonate 7-phosphate (DAHP) to dehydroquinate (DHQ). This chain is 3-dehydroquinate synthase, found in Bacillus cytotoxicus (strain DSM 22905 / CIP 110041 / 391-98 / NVH 391-98).